The following is a 466-amino-acid chain: Vimentin (466 aa).

2 stretches are compositionally biased toward low complexity: residues 1–13 and 20–33; these read MSTRSVSSSSYRR and TSSRPSSNRSYVTT. Residues 1–33 are disordered; it reads MSTRSVSSSSYRRMFGGSGTSSRPSSNRSYVTT. The residue at position 2 (Ser2) is an N-acetylserine. Positions 2–95 are head; that stretch reads STRSVSSSSY…FSLADAINTE (94 aa). A Phosphoserine modification is found at Ser5. Position 7 is a phosphoserine; by PKA and PKC; alternate (Ser7). Ser7 carries O-linked (GlcNAc) serine; alternate glycosylation. At Ser8 the chain carries Phosphoserine. Phosphoserine; by PKC occurs at positions 9 and 10. Residue Thr20 is modified to Phosphothreonine. Ser21 is modified (phosphoserine; by PKC). Ser25 bears the Phosphoserine; by PKA and PKC mark. A Phosphoserine; by PKC modification is found at Ser26. Thr33 is a glycosylation site (O-linked (GlcNAc) threonine). O-linked (GlcNAc) serine; alternate glycosylation occurs at Ser34. Position 34 is a phosphoserine; by PKC; alternate (Ser34). The residue at position 39 (Ser39) is a Phosphoserine; by CaMK2, PKA, PKC and ROCK2. Residue Ser42 is modified to Phosphoserine; by PKC. The residue at position 47 (Ser47) is a Phosphoserine; by PKA. A Phosphoserine modification is found at Ser49. Ser51 carries the post-translational modification Phosphoserine; by PKA and PKC. Tyr53 carries the phosphotyrosine modification. Phosphoserine occurs at positions 55 and 56. Phosphotyrosine is present on Tyr61. A Phosphoserine; by PKA and PKC modification is found at Ser66. Ser72 is subject to Phosphoserine; by AURKB and ROCK2. A Phosphoserine modification is found at Ser73. At Ser83 the chain carries Phosphoserine; by CaMK2. Phosphoserine is present on Ser87. A coil 1A region spans residues 96–131; the sequence is FKNTRTNEKVELQELNDRFANYIDKVRFLEQQNKIL. Residues 96–131 adopt a coiled-coil conformation; that stretch reads FKNTRTNEKVELQELNDRFANYIDKVRFLEQQNKIL. The IF rod domain maps to 103–411; that stretch reads EKVELQELND…KLLEGEESRI (309 aa). A Glycyl lysine isopeptide (Lys-Gly) (interchain with G-Cter in SUMO2) cross-link involves residue Lys104. Tyr117 carries the phosphotyrosine modification. N6-acetyllysine; alternate is present on residues Lys120, Lys129, and Lys139. 2 positions are modified to N6-succinyllysine; alternate: Lys120 and Lys129. Residues Lys120, Lys129, and Lys139 each participate in a glycyl lysine isopeptide (Lys-Gly) (interchain with G-Cter in SUMO2); alternate cross-link. Residues 132–153 are linker 1; that stretch reads LAELEQLKGQGKSRLGDLYEEE. Residue Ser144 is modified to Phosphoserine. The stretch at 154–245 forms a coiled coil; the sequence is MRELRRQVDQ…KLHDEEIQEL (92 aa). The segment at 154–245 is coil 1B; it reads MRELRRQVDQ…KLHDEEIQEL (92 aa). Lys168 carries the N6-acetyllysine modification. Position 188 is an N6-acetyllysine; alternate (Lys188). Lys188 bears the N6-succinyllysine; alternate mark. Ser214 is modified (phosphoserine). Lys223 is modified (N6-acetyllysine; alternate). Lys223 participates in a covalent cross-link: Glycyl lysine isopeptide (Lys-Gly) (interchain with G-Cter in SUMO2); alternate. A Phosphoserine modification is found at Ser226. Lys235 carries the post-translational modification N6-acetyllysine. The interval 246–268 is linker 12; the sequence is QAQIQEQHVQIDVDVSKPDLTAA. Lys262 participates in a covalent cross-link: Glycyl lysine isopeptide (Lys-Gly) (interchain with G-Cter in SUMO2). Residues 269–407 are coil 2; sequence LRDVRQQYES…ATYRKLLEGE (139 aa). The residue at position 294 (Lys294) is an N6-acetyllysine; alternate. Position 294 is an N6-succinyllysine; alternate (Lys294). Lys294 participates in a covalent cross-link: Glycyl lysine isopeptide (Lys-Gly) (interchain with G-Cter in SUMO2); alternate. Ser299 bears the Phosphoserine mark. Positions 303–407 form a coiled coil; that stretch reads NRNNDALRQA…ATYRKLLEGE (105 aa). Residue Lys313 forms a Glycyl lysine isopeptide (Lys-Gly) (interchain with G-Cter in SUMO2) linkage. Ser325 carries the phosphoserine modification. Residues 326–329 carry the [IL]-x-C-x-x-[DE] motif motif; that stretch reads LTCE. Lys373 bears the N6-acetyllysine; alternate mark. Lys373 is covalently cross-linked (Glycyl lysine isopeptide (Lys-Gly) (interchain with G-Cter in SUMO2); alternate). The tract at residues 408-466 is tail; the sequence is ESRISLPLPTFSSLNLRETNLESLPLVDTHSKRTLLIKTVETRDGQVINETSQHHDDLE. 4 positions are modified to phosphoserine: Ser409, Ser412, Ser419, and Ser420. A Phosphothreonine modification is found at Thr426. Ser430 carries the phosphoserine modification. A Phosphothreonine modification is found at Thr436. Ser438 carries the post-translational modification Phosphoserine. Lys439 participates in a covalent cross-link: Glycyl lysine isopeptide (Lys-Gly) (interchain with G-Cter in SUMO2). At Lys445 the chain carries N6-acetyllysine; alternate. Lys445 is subject to N6-succinyllysine; alternate. Lys445 participates in a covalent cross-link: Glycyl lysine isopeptide (Lys-Gly) (interchain with G-Cter in SUMO2); alternate. Lys445 participates in a covalent cross-link: Glycyl lysine isopeptide (Lys-Gly) (interchain with G-Cter in SUMO1); alternate. Residues Thr446 and Thr458 each carry the phosphothreonine modification. Ser459 is subject to Phosphoserine.

The protein belongs to the intermediate filament family. Homomer assembled from elementary dimers. Identified in complexes that contain VIM, EZR, AHNAK, BFSP1, BFSP2, ANK2, PLEC, PRX and spectrin. Interacts with BCAS3. Interacts with LGSN. Interacts with SYNM. Interacts (via rod region) with PLEC (via CH 1 domain). Interacts with PLEC isoform 1C. Interacts with STK33. Interacts with LARP6. Interacts with RAB8B. Interacts with TOR1A; the interaction associates TOR1A with the cytoskeleton. Interacts with TOR1AIP1. Interacts with DIAPH1. Interacts with EPPK1; interaction is dependent of higher-order structure of intermediate filament. Interacts with the non-receptor tyrosine kinase SRMS; the interaction leads to phosphorylation of VIM. Interacts with NOD2. Interacts (via head region) with CORO1C. Interacts with HDGF. Interacts with PRKCE (via phorbol-ester/DAG-type 2 domain). Interacts with BFSP2. Interacts with PPL. Interacts with PKP1 and PKP2. Interacts with SCRIB (via PDZ domains); the interaction protects SCRIB from proteasomal degradation and facilitates SCRIB localization to intermediate filaments, the interaction is reduced by cell contact inhibition. Phosphorylation by PKN1 inhibits the formation of filaments. Filament disassembly during mitosis is promoted by phosphorylation at Ser-55 as well as by nestin. One of the most prominent phosphoproteins in various cells of mesenchymal origin. Phosphorylation is enhanced during cell division, at which time vimentin filaments are significantly reorganized. Phosphorylated at Ser-56 by CDK5 during neutrophil secretion in the cytoplasm. Phosphorylated by STK33. Phosphorylated on tyrosine residues by SRMS. Post-translationally, S-nitrosylation is induced by interferon-gamma and oxidatively-modified low-densitity lipoprotein (LDL(ox)) possibly implicating the iNOS-S100A8/9 transnitrosylase complex. Detected in eye lens fiber cells (at protein level). Expressed in retinal lens epithelial cells (at protein level). Expressed in Langerhans cells in the epidermis (at protein level).

It localises to the cytoplasm. The protein localises to the cytoskeleton. It is found in the nucleus matrix. The protein resides in the cell membrane. Vimentins are class-III intermediate filaments found in various non-epithelial cells, especially mesenchymal cells. Vimentin is attached to the nucleus, endoplasmic reticulum, and mitochondria, either laterally or terminally. Plays a role in cell directional movement, orientation, cell sheet organization and Golgi complex polarization at the cell migration front. Protects SCRIB from proteasomal degradation and facilitates its localization to intermediate filaments in a cell contact-mediated manner. In terms of biological role, involved with LARP6 in the stabilization of type I collagen mRNAs for CO1A1 and CO1A2. In Mus musculus (Mouse), this protein is Vimentin.